The primary structure comprises 1037 residues: Presequence protease, mitochondrial (1037 aa).

Residues 1–15 (MWRCGGRQGLGVLRR) constitute a mitochondrion transit peptide. His-104 serves as a coordination point for Zn(2+). The Proton acceptor role is filled by Glu-107. The Zn(2+) site is built by His-108 and Glu-205. Cys-119 and Cys-556 are oxidised to a cystine. At Lys-759 the chain carries N6-acetyllysine. The residue at position 770 (Lys-770) is an N6-acetyllysine; alternate. Lys-770 is subject to N6-succinyllysine; alternate. The segment at 803–834 (IGRSKKERRPVRPHTVEKPVPSSSGGDAHVPH) is disordered. Positions 804–814 (GRSKKERRPVR) are enriched in basic residues. Residue Lys-849 is modified to N6-succinyllysine. Residue Lys-884 is modified to N6-acetyllysine. At Lys-946 the chain carries N6-succinyllysine.

This sequence belongs to the peptidase M16 family. PreP subfamily. In terms of assembly, monomer and homodimer; homodimerization is induced by binding of the substrate. Requires Zn(2+) as cofactor. A disulfide bond locks the enzyme in the closed conformation preventing substrate entry into the catalytic chamber.

The protein resides in the mitochondrion matrix. Mainly exists in a closed and catalytically competent conformation but a closed-to-open switch allows substrate entry into the catalytic chamber. Substrate binding induces closure and dimerization. A disulfide bond may lock the enzyme in a closed conformation preventing substrate entry into the catalytic chamber, participating in redox regulation of the enzyme. Inhibited by metal-chelating agents. Inhibited by nickel and zinc excess, and slightly activated by manganese. Its function is as follows. Metalloendopeptidase of the mitochondrial matrix that functions in peptide cleavage and degradation rather than in protein processing. Has an ATP-independent activity. Specifically cleaves peptides in the range of 5 to 65 residues. Shows a preference for cleavage after small polar residues and before basic residues, but without any positional preference. Degrades the transit peptides of mitochondrial proteins after their cleavage. Also degrades other unstructured peptides. It is also able to degrade amyloid-beta protein 40, one of the peptides produced by APP processing, when it accumulates in mitochondrion. It is a highly efficient protease, at least toward amyloid-beta protein 40. Cleaves that peptide at a specific position and is probably not processive, releasing digested peptides intermediates that can be further cleaved subsequently. It is also able to degrade amyloid-beta protein 42. In Pongo abelii (Sumatran orangutan), this protein is Presequence protease, mitochondrial.